Consider the following 290-residue polypeptide: GTPase Era (290 aa).

Positions 2 to 168 (KVCIISILGR…IEILKEYAYN (167 aa)) constitute an Era-type G domain. Residues 10-17 (GRPNVGKS) are G1. 10–17 (GRPNVGKS) is a GTP binding site. Positions 36–40 (QTTRD) are G2. The G3 stretch occupies residues 57–60 (DTPG). GTP-binding positions include 57–61 (DTPGI) and 118–121 (SKID). The interval 118–121 (SKID) is G4. Residues 147–149 (VSN) are G5. In terms of domain architecture, KH type-2 spans 199 to 275 (LTDELPHSIA…TLNLKVKVSN (77 aa)).

This sequence belongs to the TRAFAC class TrmE-Era-EngA-EngB-Septin-like GTPase superfamily. Era GTPase family. In terms of assembly, monomer.

The protein localises to the cytoplasm. Its subcellular location is the cell membrane. An essential GTPase that binds both GDP and GTP, with rapid nucleotide exchange. Plays a role in 16S rRNA processing and 30S ribosomal subunit biogenesis and possibly also in cell cycle regulation and energy metabolism. This chain is GTPase Era, found in Mycoplasmopsis agalactiae (strain NCTC 10123 / CIP 59.7 / PG2) (Mycoplasma agalactiae).